The chain runs to 292 residues: Elongation factor Ts (292 aa).

An involved in Mg(2+) ion dislocation from EF-Tu region spans residues 81-84; it reads TDFV.

The protein belongs to the EF-Ts family.

The protein resides in the cytoplasm. Associates with the EF-Tu.GDP complex and induces the exchange of GDP to GTP. It remains bound to the aminoacyl-tRNA.EF-Tu.GTP complex up to the GTP hydrolysis stage on the ribosome. The sequence is that of Elongation factor Ts from Alkalilimnicola ehrlichii (strain ATCC BAA-1101 / DSM 17681 / MLHE-1).